Here is a 138-residue protein sequence, read N- to C-terminus: Extracellular glycoprotein lacritin (138 aa).

The signal sequence occupies residues 1-19; sequence MKFTTLLFLAAVAGALVYA. The segment at 20 to 79 is disordered; it reads EDASSDSTGADPAQEAGTSKPNEEISGPAEPASPPETTTTAQETSAAAVQGTAKVTSSRQ. Residues 43-67 show a composition bias toward low complexity; it reads EISGPAEPASPPETTTTAQETSAAA. An N-linked (GlcNAc...) asparagine glycan is attached at N119.

As to expression, expressed in secretory granules of many acinar cells in lacrimal gland and in scattered acinar cells of salivary glands.

The protein localises to the secreted. In terms of biological role, modulates secretion by lacrimal acinar cells. The protein is Extracellular glycoprotein lacritin (LACRT) of Homo sapiens (Human).